Here is an 863-residue protein sequence, read N- to C-terminus: Bifunctional uridylyltransferase/uridylyl-removing enzyme (863 aa).

The uridylyltransferase stretch occupies residues 1–328 (MLFSPTLSSL…SSNQDTVIDQ (328 aa)). The uridylyl-removing stretch occupies residues 329–687 (LDDDFQLINQ…ISNRFSLGGT (359 aa)). Residues 446–568 (VDEHTLRVML…MQNQVRLDYL (123 aa)) enclose the HD domain. 2 ACT domains span residues 688 to 764 (EVFI…KLPA) and 794 to 863 (EMEL…QQIR).

It belongs to the GlnD family. Mg(2+) is required as a cofactor.

It catalyses the reaction [protein-PII]-L-tyrosine + UTP = [protein-PII]-uridylyl-L-tyrosine + diphosphate. It carries out the reaction [protein-PII]-uridylyl-L-tyrosine + H2O = [protein-PII]-L-tyrosine + UMP + H(+). Its activity is regulated as follows. Uridylyltransferase (UTase) activity is inhibited by glutamine, while glutamine activates uridylyl-removing (UR) activity. Its function is as follows. Modifies, by uridylylation and deuridylylation, the PII regulatory proteins (GlnB and homologs), in response to the nitrogen status of the cell that GlnD senses through the glutamine level. Under low glutamine levels, catalyzes the conversion of the PII proteins and UTP to PII-UMP and PPi, while under higher glutamine levels, GlnD hydrolyzes PII-UMP to PII and UMP (deuridylylation). Thus, controls uridylylation state and activity of the PII proteins, and plays an important role in the regulation of nitrogen assimilation and metabolism. This Haemophilus influenzae (strain ATCC 51907 / DSM 11121 / KW20 / Rd) protein is Bifunctional uridylyltransferase/uridylyl-removing enzyme.